The sequence spans 471 residues: 3-isopropylmalate dehydratase large subunit (471 aa).

Residues C347, C407, and C410 each coordinate [4Fe-4S] cluster.

This sequence belongs to the aconitase/IPM isomerase family. LeuC type 1 subfamily. As to quaternary structure, heterodimer of LeuC and LeuD. [4Fe-4S] cluster serves as cofactor.

The enzyme catalyses (2R,3S)-3-isopropylmalate = (2S)-2-isopropylmalate. It functions in the pathway amino-acid biosynthesis; L-leucine biosynthesis; L-leucine from 3-methyl-2-oxobutanoate: step 2/4. Functionally, catalyzes the isomerization between 2-isopropylmalate and 3-isopropylmalate, via the formation of 2-isopropylmaleate. This chain is 3-isopropylmalate dehydratase large subunit, found in Anoxybacillus flavithermus (strain DSM 21510 / WK1).